A 158-amino-acid polypeptide reads, in one-letter code: ATP synthase subunit delta, mitochondrial (158 aa).

The transit peptide at 1 to 22 (MFRLTSARALFRVANVAARRTY) directs the protein to the mitochondrion.

It belongs to the ATPase epsilon chain family. As to quaternary structure, F-type ATPases have 2 components, CF(1) - the catalytic core - and CF(0) - the membrane proton channel. CF(1) has five subunits: alpha(3), beta(3), gamma(1), delta(1), epsilon(1). CF(0) has three main subunits: a, b and c.

The protein resides in the mitochondrion. The protein localises to the mitochondrion inner membrane. Functionally, mitochondrial membrane ATP synthase (F(1)F(0) ATP synthase or Complex V) produces ATP from ADP in the presence of a proton gradient across the membrane which is generated by electron transport complexes of the respiratory chain. F-type ATPases consist of two structural domains, F(1) - containing the extramembraneous catalytic core, and F(0) - containing the membrane proton channel, linked together by a central stalk and a peripheral stalk. During catalysis, ATP turnover in the catalytic domain of F(1) is coupled via a rotary mechanism of the central stalk subunits to proton translocation. Part of the complex F(1) domain and of the central stalk which is part of the complex rotary element. Rotation of the central stalk against the surrounding alpha(3)beta(3) subunits leads to hydrolysis of ATP in three separate catalytic sites on the beta subunits. The chain is ATP synthase subunit delta, mitochondrial (ATP16) from Eremothecium gossypii (strain ATCC 10895 / CBS 109.51 / FGSC 9923 / NRRL Y-1056) (Yeast).